We begin with the raw amino-acid sequence, 361 residues long: Ribosomal RNA large subunit methyltransferase M (361 aa).

Residues Ser187, 220-223 (CPGG), Asp239, Asp259, and Asp276 each bind S-adenosyl-L-methionine. The Proton acceptor role is filled by Lys305.

It belongs to the class I-like SAM-binding methyltransferase superfamily. RNA methyltransferase RlmE family. RlmM subfamily. Monomer.

The protein resides in the cytoplasm. It carries out the reaction cytidine(2498) in 23S rRNA + S-adenosyl-L-methionine = 2'-O-methylcytidine(2498) in 23S rRNA + S-adenosyl-L-homocysteine + H(+). In terms of biological role, catalyzes the 2'-O-methylation at nucleotide C2498 in 23S rRNA. The protein is Ribosomal RNA large subunit methyltransferase M of Shewanella sp. (strain MR-4).